A 481-amino-acid chain; its full sequence is RuvB-like helicase 2 (481 aa).

76 to 83 is an ATP binding site; the sequence is GPPSTGKT.

Belongs to the RuvB family. In terms of assembly, may form heterododecamers with hel-1/rvb1. Component of the SWR1 chromatin remodeling complex, the INO80 chromatin remodeling complex, and of the R2TP complex.

Its subcellular location is the nucleus. The catalysed reaction is ATP + H2O = ADP + phosphate + H(+). Its function is as follows. DNA helicase which participates in several chromatin remodeling complexes, including the SWR1 and the INO80 complexes. The SWR1 complex mediates the ATP-dependent exchange of histone H2A for the H2A variant H2A.Z leading to transcriptional regulation of selected genes by chromatin remodeling. The INO80 complex remodels chromatin by shifting nucleosomes and is involved in DNA repair. Also involved in pre-rRNA processing. The protein is RuvB-like helicase 2 (hel-2) of Neurospora crassa (strain ATCC 24698 / 74-OR23-1A / CBS 708.71 / DSM 1257 / FGSC 987).